The primary structure comprises 391 residues: Protein ABCI12, chloroplastic (391 aa).

The transit peptide at 1–63 (MNHSNLANPT…LAAKRVFIVR (63 aa)) directs the protein to the chloroplast. 5 consecutive transmembrane segments (helical) span residues 134–154 (ANLV…ILVL), 168–188 (LLSG…PPML), 229–249 (VGST…ICLA), 263–283 (FLFP…TLLL), and 370–390 (FASV…EYFL).

It is found in the plastid. The protein resides in the chloroplast. It localises to the membrane. This is Protein ABCI12, chloroplastic (ABCI12) from Arabidopsis thaliana (Mouse-ear cress).